Here is a 913-residue protein sequence, read N- to C-terminus: Eukaryotic translation initiation factor 3 subunit C (913 aa).

A disordered region spans residues 1 to 44 (MSRFFTTGSDSESESSLSGEELVTKPVGGNYGKQPLLLSEDEED). Residues 8–21 (GSDSESESSLSGEE) are compositionally biased toward low complexity. Residues serine 9, serine 11, serine 13, serine 15, serine 16, serine 18, and serine 39 each carry the phosphoserine modification. Position 99 is an N6-acetyllysine (lysine 99). Disordered regions lie at residues 157–301 (TSYK…GGEW) and 522–542 (QLTP…NEGE). 4 positions are modified to phosphoserine: serine 166, serine 178, serine 181, and serine 182. The span at 166–190 (SADEDAEKNEEDSEGSSDEDEDEDG) shows a compositional bias: acidic residues. Positions 199-216 (KKSEAPSGESRKFLKKMD) are enriched in basic and acidic residues. Acidic residues predominate over residues 217–232 (DEDEDSEDSEDDEDWD). Residues 261–278 (PTTDEDKKAAEKKREDKA) are compositionally biased toward basic and acidic residues. Residues 522–531 (QLTPPEGSSK) are compositionally biased toward polar residues. Threonine 524 is subject to Phosphothreonine. Lysine 643 is modified (N6-acetyllysine). The PCI domain maps to 673–849 (FHLHINLELL…QTVVMHRTEP (177 aa)). Positions 885-913 (FRDQKDGYRKNEGYMRRGGYRQQQSQTAY) are disordered. Basic and acidic residues predominate over residues 886-899 (RDQKDGYRKNEGYM). Serine 909 bears the Phosphoserine mark.

In terms of assembly, component of the eukaryotic translation initiation factor 3 (eIF-3) complex, which is composed of 13 subunits: EIF3A, EIF3B, EIF3C, EIF3D, EIF3E, EIF3F, EIF3G, EIF3H, EIF3I, EIF3J, EIF3K, EIF3L and EIF3M. The eIF-3 complex appears to include 3 stable modules: module A is composed of EIF3A, EIF3B, EIF3G and EIF3I; module B is composed of EIF3F, EIF3H, and EIF3M; and module C is composed of EIF3C, EIF3D, EIF3E, EIF3K and EIF3L. EIF3C of module C binds EIF3B of module A and EIF3H of module B, thereby linking the three modules. EIF3J is a labile subunit that binds to the eIF-3 complex via EIF3B. The eIF-3 complex interacts with RPS6KB1 under conditions of nutrient depletion. Mitogenic stimulation leads to binding and activation of a complex composed of MTOR and RPTOR, leading to phosphorylation and release of RPS6KB1 and binding of EIF4B to eIF-3. Identified in a HCV IRES-mediated translation complex, at least composed of EIF3C, IGF2BP1, RPS3 and HCV RNA-replicon. Interacts with ALKBH4, IFIT1 and IFIT2. Interacts with BZW2/5MP1. Post-translationally, phosphorylated. Phosphorylation is enhanced upon serum stimulation.

The protein localises to the cytoplasm. Its function is as follows. Component of the eukaryotic translation initiation factor 3 (eIF-3) complex, which is required for several steps in the initiation of protein synthesis. The eIF-3 complex associates with the 40S ribosome and facilitates the recruitment of eIF-1, eIF-1A, eIF-2:GTP:methionyl-tRNAi and eIF-5 to form the 43S pre-initiation complex (43S PIC). The eIF-3 complex stimulates mRNA recruitment to the 43S PIC and scanning of the mRNA for AUG recognition. The eIF-3 complex is also required for disassembly and recycling of post-termination ribosomal complexes and subsequently prevents premature joining of the 40S and 60S ribosomal subunits prior to initiation. The eIF-3 complex specifically targets and initiates translation of a subset of mRNAs involved in cell proliferation, including cell cycling, differentiation and apoptosis, and uses different modes of RNA stem-loop binding to exert either translational activation or repression. This is Eukaryotic translation initiation factor 3 subunit C from Homo sapiens (Human).